A 282-amino-acid chain; its full sequence is Tyrosine recombinase XerA (282 aa).

The Core-binding (CB) domain maps to S2–G79. The 177-residue stretch at S95–E271 folds into the Tyr recombinase domain. Residues R132, K157, H223, R226, and H249 contribute to the active site. Y258 functions as the O-(3'-phospho-DNA)-tyrosine intermediate in the catalytic mechanism.

The protein belongs to the 'phage' integrase family. XerA subfamily.

The protein resides in the cytoplasm. In terms of biological role, site-specific tyrosine recombinase, which acts by catalyzing the cutting and rejoining of the recombining DNA molecules. This is Tyrosine recombinase XerA from Thermococcus kodakarensis (strain ATCC BAA-918 / JCM 12380 / KOD1) (Pyrococcus kodakaraensis (strain KOD1)).